The chain runs to 172 residues: Adenine phosphoribosyltransferase (172 aa).

This sequence belongs to the purine/pyrimidine phosphoribosyltransferase family. As to quaternary structure, homodimer.

It is found in the cytoplasm. It catalyses the reaction AMP + diphosphate = 5-phospho-alpha-D-ribose 1-diphosphate + adenine. It participates in purine metabolism; AMP biosynthesis via salvage pathway; AMP from adenine: step 1/1. In terms of biological role, catalyzes a salvage reaction resulting in the formation of AMP, that is energically less costly than de novo synthesis. This Rippkaea orientalis (strain PCC 8801 / RF-1) (Cyanothece sp. (strain PCC 8801)) protein is Adenine phosphoribosyltransferase.